The chain runs to 360 residues: D-alanine--D-alanine ligase (360 aa).

The 207-residue stretch at 146 to 352 (KLCVADAGIA…YRNLITRLLE (207 aa)) folds into the ATP-grasp domain. 179–234 (EAQVSYPLFVKPASLGSSIGISKVHNREELHPALQAACALDWKVVVESTVKGREIE) contacts ATP. The Mg(2+) site is built by aspartate 305, glutamate 319, and asparagine 321.

It belongs to the D-alanine--D-alanine ligase family. It depends on Mg(2+) as a cofactor. Requires Mn(2+) as cofactor.

It is found in the cytoplasm. It catalyses the reaction 2 D-alanine + ATP = D-alanyl-D-alanine + ADP + phosphate + H(+). The protein operates within cell wall biogenesis; peptidoglycan biosynthesis. Its function is as follows. Cell wall formation. This chain is D-alanine--D-alanine ligase, found in Chlorobium chlorochromatii (strain CaD3).